A 247-amino-acid polypeptide reads, in one-letter code: Probable transcriptional regulatory protein Gura_1416 (247 aa).

The protein belongs to the TACO1 family.

The protein resides in the cytoplasm. The polypeptide is Probable transcriptional regulatory protein Gura_1416 (Geotalea uraniireducens (strain Rf4) (Geobacter uraniireducens)).